The chain runs to 106 residues: Class II hydrophobin 6 (106 aa).

The first 16 residues, 1–16 (MQFFTVATLFLATAFA), serve as a signal peptide directing secretion. Intrachain disulfides connect cysteine 36–cysteine 86, cysteine 47–cysteine 77, cysteine 48–cysteine 60, and cysteine 87–cysteine 98.

This sequence belongs to the cerato-ulmin hydrophobin family. In terms of assembly, homodimer. Homodimers further self-assemble to form highly ordered films at water-air interfaces through intermolecular interactions.

It is found in the secreted. The protein localises to the cell wall. Functionally, aerial growth, conidiation, and dispersal of filamentous fungi in the environment rely upon a capability of their secreting small amphipathic proteins called hydrophobins (HPBs) with low sequence identity. Class I can self-assemble into an outermost layer of rodlet bundles on aerial cell surfaces, conferring cellular hydrophobicity that supports fungal growth, development and dispersal; whereas Class II form highly ordered films at water-air interfaces through intermolecular interactions but contribute nothing to the rodlet structure. HFB2-6 is a class II hydrophobin that has a function in root colonization. Acts as an effector in poplar by up-regulating the expression of genes related to both the jasmonic acid and salicylic acid signal transduction pathways, which not only causes induced systemic resistance (ISR), but also systemic acquired resistance (SAR), giving poplar broad-spectrum resistance to pathogens. Also induces genes related to auxin signal transduction to promote poplar growth. Plays roles in interactions with both biotic and abiotic environmental conditions such as the presence of the pathogen Alternaria alternata or nutrient starvation conditions. This is Class II hydrophobin 6 from Trichoderma asperellum (strain ATCC 204424 / CBS 433.97 / NBRC 101777).